The primary structure comprises 391 residues: 1-deoxy-D-xylulose 5-phosphate reductoisomerase (391 aa).

NADPH-binding residues include Thr-11, Gly-12, Ser-13, Ile-14, and Asn-126. A 1-deoxy-D-xylulose 5-phosphate-binding site is contributed by Lys-127. An NADPH-binding site is contributed by Glu-128. Asp-152 serves as a coordination point for Mn(2+). 1-deoxy-D-xylulose 5-phosphate contacts are provided by Ser-153, Glu-154, Ser-176, and His-199. Residue Glu-154 coordinates Mn(2+). Gly-205 lines the NADPH pocket. Residues Ser-212, Asn-217, Lys-218, and Glu-221 each contribute to the 1-deoxy-D-xylulose 5-phosphate site. Residue Glu-221 coordinates Mn(2+).

It belongs to the DXR family. Mg(2+) serves as cofactor. The cofactor is Mn(2+).

It carries out the reaction 2-C-methyl-D-erythritol 4-phosphate + NADP(+) = 1-deoxy-D-xylulose 5-phosphate + NADPH + H(+). It participates in isoprenoid biosynthesis; isopentenyl diphosphate biosynthesis via DXP pathway; isopentenyl diphosphate from 1-deoxy-D-xylulose 5-phosphate: step 1/6. In terms of biological role, catalyzes the NADPH-dependent rearrangement and reduction of 1-deoxy-D-xylulose-5-phosphate (DXP) to 2-C-methyl-D-erythritol 4-phosphate (MEP). This is 1-deoxy-D-xylulose 5-phosphate reductoisomerase from Acidithiobacillus ferrooxidans (strain ATCC 53993 / BNL-5-31) (Leptospirillum ferrooxidans (ATCC 53993)).